Here is a 400-residue protein sequence, read N- to C-terminus: S-adenosylmethionine synthase (400 aa).

H17 is a binding site for ATP. A Mg(2+)-binding site is contributed by D19. E45 contacts K(+). Residues E58 and Q101 each contribute to the L-methionine site. A flexible loop region spans residues 101–111 (QSPDIAMGVDQ). Residues 177-179 (DGK), 244-245 (RF), D253, 259-260 (RK), A276, and K280 each bind ATP. D253 serves as a coordination point for L-methionine. K284 is an L-methionine binding site.

Belongs to the AdoMet synthase family. In terms of assembly, homotetramer; dimer of dimers. It depends on Mg(2+) as a cofactor. K(+) serves as cofactor.

Its subcellular location is the cytoplasm. The catalysed reaction is L-methionine + ATP + H2O = S-adenosyl-L-methionine + phosphate + diphosphate. The protein operates within amino-acid biosynthesis; S-adenosyl-L-methionine biosynthesis; S-adenosyl-L-methionine from L-methionine: step 1/1. Catalyzes the formation of S-adenosylmethionine (AdoMet) from methionine and ATP. The overall synthetic reaction is composed of two sequential steps, AdoMet formation and the subsequent tripolyphosphate hydrolysis which occurs prior to release of AdoMet from the enzyme. The sequence is that of S-adenosylmethionine synthase from Bacillus licheniformis (strain ATCC 14580 / DSM 13 / JCM 2505 / CCUG 7422 / NBRC 12200 / NCIMB 9375 / NCTC 10341 / NRRL NRS-1264 / Gibson 46).